The following is a 355-amino-acid chain: Fructose-1,6-bisphosphatase class 1 (355 aa).

E90, D109, L111, and D112 together coordinate Mg(2+). Residues 112-115 (DGSS), N204, and 256-258 (YLY) each bind substrate. E276 provides a ligand contact to Mg(2+).

The protein belongs to the FBPase class 1 family. As to quaternary structure, homotetramer. Requires Mg(2+) as cofactor.

It localises to the cytoplasm. It carries out the reaction beta-D-fructose 1,6-bisphosphate + H2O = beta-D-fructose 6-phosphate + phosphate. It functions in the pathway carbohydrate biosynthesis; gluconeogenesis. In Acidiphilium cryptum (strain JF-5), this protein is Fructose-1,6-bisphosphatase class 1.